Consider the following 141-residue polypeptide: Cystatin-SN (141 aa).

The signal sequence occupies residues M1–A20. The short motif at Q76 to G80 is the Secondary area of contact element. 2 disulfides stabilise this stretch: C94–C104 and C118–C138.

Belongs to the cystatin family. As to expression, expressed in submandibular and sublingual saliva but not in parotid saliva (at protein level). Expressed in saliva, tears, urine and seminal fluid.

Its subcellular location is the secreted. In terms of biological role, human saliva appears to contain several cysteine proteinase inhibitors that are immunologically related to cystatin S but that differ in their specificity due to amino acid sequence differences. Cystatin SN, with a pI of 7.5, is a much better inhibitor of papain and dipeptidyl peptidase I than is cystatin S, although both inhibit ficin equally well. The protein is Cystatin-SN (CST1) of Homo sapiens (Human).